We begin with the raw amino-acid sequence, 282 residues long: Elongation factor Ts (282 aa).

An involved in Mg(2+) ion dislocation from EF-Tu region spans residues 79–82 (TDFV).

Belongs to the EF-Ts family.

Its subcellular location is the cytoplasm. Associates with the EF-Tu.GDP complex and induces the exchange of GDP to GTP. It remains bound to the aminoacyl-tRNA.EF-Tu.GTP complex up to the GTP hydrolysis stage on the ribosome. This is Elongation factor Ts from Shewanella sediminis (strain HAW-EB3).